The primary structure comprises 283 residues: Ribonuclease P protein subunit p38 (283 aa).

At A2 the chain carries N-acetylalanine. S12, S226, and S235 each carry phosphoserine.

It belongs to the eukaryotic ribosomal protein eL8 family. In terms of assembly, component of nuclear RNase P and RNase MRP ribonucleoproteins. RNase P consists of a catalytic RNA moiety and about 10 protein subunits; POP1, POP4, POP5, POP7, RPP14, RPP21, RPP25, RPP30, RPP38 and RPP40. Within the RNase P complex, POP1, POP7 and RPP25 form the 'finger' subcomplex, POP5, RPP14, RPP40 and homodimeric RPP30 form the 'palm' subcomplex, and RPP21, POP4 and RPP38 form the 'wrist' subcomplex. All subunits of the RNase P complex interact with the catalytic RNA. Several subunits of RNase P are also part of the RNase MRP complex. RNase MRP consists of a catalytic RNA moiety and about 8 protein subunits; POP1, POP7, RPP25, RPP30, RPP38, RPP40 and possibly also POP4 and POP5.

Its subcellular location is the nucleus. The protein resides in the nucleolus. Its function is as follows. Component of ribonuclease P, a ribonucleoprotein complex that generates mature tRNA molecules by cleaving their 5'-ends. Also a component of the MRP ribonuclease complex, which cleaves pre-rRNA sequences. The sequence is that of Ribonuclease P protein subunit p38 (RPP38) from Homo sapiens (Human).